Consider the following 196-residue polypeptide: ATP-dependent Clp protease proteolytic subunit (196 aa).

The Nucleophile role is filled by serine 99. Histidine 124 is a catalytic residue.

This sequence belongs to the peptidase S14 family. As to quaternary structure, fourteen ClpP subunits assemble into 2 heptameric rings which stack back to back to give a disk-like structure with a central cavity, resembling the structure of eukaryotic proteasomes.

It localises to the cytoplasm. The catalysed reaction is Hydrolysis of proteins to small peptides in the presence of ATP and magnesium. alpha-casein is the usual test substrate. In the absence of ATP, only oligopeptides shorter than five residues are hydrolyzed (such as succinyl-Leu-Tyr-|-NHMec, and Leu-Tyr-Leu-|-Tyr-Trp, in which cleavage of the -Tyr-|-Leu- and -Tyr-|-Trp bonds also occurs).. Cleaves peptides in various proteins in a process that requires ATP hydrolysis. Has a chymotrypsin-like activity. Plays a major role in the degradation of misfolded proteins. The chain is ATP-dependent Clp protease proteolytic subunit from Nitratiruptor sp. (strain SB155-2).